The following is a 193-amino-acid chain: Bifunctional protein PyrR (193 aa).

Residues 48 to 49 (TR), R89, R93, 110 to 118 (DDVLFSGRT), R143, and V167 contribute to the substrate site. The PRPP-binding signature appears at 106 to 118 (VVLVDDVLFSGRT).

Belongs to the purine/pyrimidine phosphoribosyltransferase family. PyrR subfamily.

The catalysed reaction is UMP + diphosphate = 5-phospho-alpha-D-ribose 1-diphosphate + uracil. In terms of biological role, regulates the transcription of the pyrimidine nucleotide (pyr) operon in response to exogenous pyrimidines. Functionally, also displays a weak uracil phosphoribosyltransferase activity which is not physiologically significant. This is Bifunctional protein PyrR from Streptomyces coelicolor (strain ATCC BAA-471 / A3(2) / M145).